Consider the following 247-residue polypeptide: 6-carboxyhexanoate--CoA ligase (247 aa).

The protein belongs to the BioW family. Homodimer. Mg(2+) serves as cofactor.

The enzyme catalyses heptanedioate + ATP + CoA = 6-carboxyhexanoyl-CoA + AMP + diphosphate. The protein operates within metabolic intermediate metabolism; pimeloyl-CoA biosynthesis; pimeloyl-CoA from pimelate: step 1/1. In terms of biological role, catalyzes the transformation of pimelate into pimeloyl-CoA with concomitant hydrolysis of ATP to AMP. This is 6-carboxyhexanoate--CoA ligase from Persephonella marina (strain DSM 14350 / EX-H1).